Consider the following 448-residue polypeptide: Ribosomal protein uS12 methylthiotransferase RimO (448 aa).

The MTTase N-terminal domain maps to 7–123; sequence EKVSLVSLGC…IAEIIAEKKQ (117 aa). [4Fe-4S] cluster contacts are provided by Cys-16, Cys-52, Cys-86, Cys-161, Cys-165, and Cys-168. Positions 147–377 constitute a Radical SAM core domain; the sequence is SSPHYTAYLK…MRTQARVSFK (231 aa). In terms of domain architecture, TRAM spans 380 to 448; it reads RTLVDSEEDV…DYDLIGEIVD (69 aa).

This sequence belongs to the methylthiotransferase family. RimO subfamily. [4Fe-4S] cluster serves as cofactor.

The protein resides in the cytoplasm. It catalyses the reaction L-aspartate(89)-[ribosomal protein uS12]-hydrogen + (sulfur carrier)-SH + AH2 + 2 S-adenosyl-L-methionine = 3-methylsulfanyl-L-aspartate(89)-[ribosomal protein uS12]-hydrogen + (sulfur carrier)-H + 5'-deoxyadenosine + L-methionine + A + S-adenosyl-L-homocysteine + 2 H(+). Functionally, catalyzes the methylthiolation of an aspartic acid residue of ribosomal protein uS12. This chain is Ribosomal protein uS12 methylthiotransferase RimO, found in Citrifermentans bemidjiense (strain ATCC BAA-1014 / DSM 16622 / JCM 12645 / Bem) (Geobacter bemidjiensis).